The following is a 215-amino-acid chain: MLIPKKYYLLIILLSNCLLASCSINTPNPSNIALMQLTRENNYNLKWHSHKYLVKKINHYRTNGLFAYLSRNKITYANFNWQQISTNHYRLVLLNMIGNAKIDLHILPGLVKLIDFQGQSYLNEEALARIKILLGLDLPLNELHEWILGLPGQATNLTFNQQGYLHKISYHYHGQHWNITYKSYHEDKIPALPDCIEIRQDNNLIKLKMNEWSMS.

Positions 1–21 are cleaved as a signal peptide; that stretch reads MLIPKKYYLLIILLSNCLLAS. The N-palmitoyl cysteine moiety is linked to residue Cys22. A lipid anchor (S-diacylglycerol cysteine) is attached at Cys22.

The protein belongs to the LolB family. Monomer.

It is found in the cell outer membrane. Functionally, plays a critical role in the incorporation of lipoproteins in the outer membrane after they are released by the LolA protein. In Baumannia cicadellinicola subsp. Homalodisca coagulata, this protein is Outer-membrane lipoprotein LolB.